Consider the following 327-residue polypeptide: Annexin A8 (327 aa).

4 Annexin repeats span residues 21-92 (FNPD…ALMY), 93-164 (PPYR…CLLQ), 177-249 (GLAL…TVVK), and 253-324 (NLHS…SLVG). Ca(2+)-binding residues include methionine 266, glycine 268, glycine 270, and aspartate 310.

This sequence belongs to the annexin family.

Its function is as follows. This protein is an anticoagulant protein that acts as an indirect inhibitor of the thromboplastin-specific complex, which is involved in the blood coagulation cascade. This is Annexin A8 from Homo sapiens (Human).